Here is a 296-residue protein sequence, read N- to C-terminus: MADQASWLERFTRYLATERQLSPMTVRNYRFELERADTLLGQRSWQQLSRQDLSGLMARLHRQGLSPRSLSLTASALKQFGQFLLKEGLIDTNPAATLSAPKQSKTLPKNLDPDSVNHLLDIPPEDGLALRDKAIMELFYSCGLRLAELAALDVKDLDRESREVRVIGKGSKERILPVGSVALAAIGDWLKVRNQMPCQDDALFVSSRGSRLSHRSIQARMEKWAQIQGLSVGVHPHKLRHSFATHMLESSGDLRAVQELLGHANLATTQIYTSLDFQHLAKVYDGAHPRARKKGD.

Positions 2 to 85 (ADQASWLERF…ALKQFGQFLL (84 aa)) constitute a Core-binding (CB) domain. Positions 106–285 (TLPKNLDPDS…DFQHLAKVYD (180 aa)) constitute a Tyr recombinase domain. Residues arginine 145, lysine 169, histidine 237, arginine 240, and histidine 263 contribute to the active site. Tyrosine 272 functions as the O-(3'-phospho-DNA)-tyrosine intermediate in the catalytic mechanism.

This sequence belongs to the 'phage' integrase family. XerC subfamily. As to quaternary structure, forms a cyclic heterotetrameric complex composed of two molecules of XerC and two molecules of XerD.

The protein localises to the cytoplasm. Its function is as follows. Site-specific tyrosine recombinase, which acts by catalyzing the cutting and rejoining of the recombining DNA molecules. The XerC-XerD complex is essential to convert dimers of the bacterial chromosome into monomers to permit their segregation at cell division. It also contributes to the segregational stability of plasmids. The sequence is that of Tyrosine recombinase XerC from Shewanella amazonensis (strain ATCC BAA-1098 / SB2B).